A 249-amino-acid polypeptide reads, in one-letter code: Ribosomal RNA small subunit methyltransferase J (249 aa).

D169 contributes to the S-adenosyl-L-methionine binding site.

The protein belongs to the methyltransferase superfamily. RsmJ family.

The protein resides in the cytoplasm. The catalysed reaction is guanosine(1516) in 16S rRNA + S-adenosyl-L-methionine = N(2)-methylguanosine(1516) in 16S rRNA + S-adenosyl-L-homocysteine + H(+). Functionally, specifically methylates the guanosine in position 1516 of 16S rRNA. The polypeptide is Ribosomal RNA small subunit methyltransferase J (Buchnera aphidicola subsp. Schizaphis graminum (strain Sg)).